The sequence spans 91 residues: Small ribosomal subunit protein uS19m (91 aa).

It belongs to the universal ribosomal protein uS19 family. As to quaternary structure, component of the mitochondrial small ribosomal subunit (mt-SSU). Mature N.crassa 74S mitochondrial ribosomes consist of a small (37S) and a large (54S) subunit. The 37S small subunit contains a 16S ribosomal RNA (16S mt-rRNA) and 32 different proteins. The 54S large subunit contains a 23S rRNA (23S mt-rRNA) and 42 different proteins.

It is found in the mitochondrion. Its function is as follows. Component of the mitochondrial ribosome (mitoribosome), a dedicated translation machinery responsible for the synthesis of mitochondrial genome-encoded proteins, including at least some of the essential transmembrane subunits of the mitochondrial respiratory chain. The mitoribosomes are attached to the mitochondrial inner membrane and translation products are cotranslationally integrated into the membrane. This is Small ribosomal subunit protein uS19m (rsm19) from Neurospora crassa (strain ATCC 24698 / 74-OR23-1A / CBS 708.71 / DSM 1257 / FGSC 987).